Consider the following 86-residue polypeptide: Large ribosomal subunit protein uL23 (86 aa).

It belongs to the universal ribosomal protein uL23 family. In terms of assembly, part of the 50S ribosomal subunit. Contacts protein L29.

In terms of biological role, binds to 23S rRNA. One of the proteins that surrounds the polypeptide exit tunnel on the outside of the ribosome. This Thermococcus onnurineus (strain NA1) protein is Large ribosomal subunit protein uL23.